The following is a 206-amino-acid chain: Thiamine-phosphate synthase (206 aa).

Residues 35–39 (QLRDK) and Asn67 contribute to the 4-amino-2-methyl-5-(diphosphooxymethyl)pyrimidine site. 2 residues coordinate Mg(2+): Asp68 and Asp87. Ser106 serves as a coordination point for 4-amino-2-methyl-5-(diphosphooxymethyl)pyrimidine. 132-134 (TGT) is a 2-[(2R,5Z)-2-carboxy-4-methylthiazol-5(2H)-ylidene]ethyl phosphate binding site. Lys135 provides a ligand contact to 4-amino-2-methyl-5-(diphosphooxymethyl)pyrimidine. Residues Gly163 and 183-184 (IS) each bind 2-[(2R,5Z)-2-carboxy-4-methylthiazol-5(2H)-ylidene]ethyl phosphate.

This sequence belongs to the thiamine-phosphate synthase family. Requires Mg(2+) as cofactor.

The catalysed reaction is 2-[(2R,5Z)-2-carboxy-4-methylthiazol-5(2H)-ylidene]ethyl phosphate + 4-amino-2-methyl-5-(diphosphooxymethyl)pyrimidine + 2 H(+) = thiamine phosphate + CO2 + diphosphate. It catalyses the reaction 2-(2-carboxy-4-methylthiazol-5-yl)ethyl phosphate + 4-amino-2-methyl-5-(diphosphooxymethyl)pyrimidine + 2 H(+) = thiamine phosphate + CO2 + diphosphate. The enzyme catalyses 4-methyl-5-(2-phosphooxyethyl)-thiazole + 4-amino-2-methyl-5-(diphosphooxymethyl)pyrimidine + H(+) = thiamine phosphate + diphosphate. It functions in the pathway cofactor biosynthesis; thiamine diphosphate biosynthesis; thiamine phosphate from 4-amino-2-methyl-5-diphosphomethylpyrimidine and 4-methyl-5-(2-phosphoethyl)-thiazole: step 1/1. In terms of biological role, condenses 4-methyl-5-(beta-hydroxyethyl)thiazole monophosphate (THZ-P) and 2-methyl-4-amino-5-hydroxymethyl pyrimidine pyrophosphate (HMP-PP) to form thiamine monophosphate (TMP). The sequence is that of Thiamine-phosphate synthase from Methanospirillum hungatei JF-1 (strain ATCC 27890 / DSM 864 / NBRC 100397 / JF-1).